Reading from the N-terminus, the 289-residue chain is MAEITAAMVKELRERTGLGMMECKKALTAAGGDIEKAIDDMRAAGAIKAAKKAGNIAAEGSIAVKIAADNKAAVIIEVNSQTDFLALQDDFKGFVAESLEKAFNEKLTDAAPLVEAREEARLALVAKTGENVNIRRLTRVEGDVVGAYLHGHRIGVVVNLKGGNPELAKDIAMHVAASNPQFLSASEVSEEAIAKEKEIFLALNADKIAGKPENIVENMVKGRISKFLAEASLVEQPFVKNPEVKVGDLAKQAGAEIVSFVRYEVGEGIEKAEVDFAAEVAAQVAATKQ.

Positions 82 to 85 (TDFL) are involved in Mg(2+) ion dislocation from EF-Tu.

It belongs to the EF-Ts family.

It localises to the cytoplasm. Its function is as follows. Associates with the EF-Tu.GDP complex and induces the exchange of GDP to GTP. It remains bound to the aminoacyl-tRNA.EF-Tu.GTP complex up to the GTP hydrolysis stage on the ribosome. This chain is Elongation factor Ts, found in Pseudomonas paraeruginosa (strain DSM 24068 / PA7) (Pseudomonas aeruginosa (strain PA7)).